A 323-amino-acid chain; its full sequence is Lipoyl synthase (323 aa).

[4Fe-4S] cluster contacts are provided by C61, C66, C72, C87, C91, C94, and S300. The Radical SAM core domain occupies 73-289; sequence WDKKHATFMI…ETVAYSKGFL (217 aa).

This sequence belongs to the radical SAM superfamily. Lipoyl synthase family. It depends on [4Fe-4S] cluster as a cofactor.

The protein resides in the cytoplasm. The enzyme catalyses [[Fe-S] cluster scaffold protein carrying a second [4Fe-4S](2+) cluster] + N(6)-octanoyl-L-lysyl-[protein] + 2 oxidized [2Fe-2S]-[ferredoxin] + 2 S-adenosyl-L-methionine + 4 H(+) = [[Fe-S] cluster scaffold protein] + N(6)-[(R)-dihydrolipoyl]-L-lysyl-[protein] + 4 Fe(3+) + 2 hydrogen sulfide + 2 5'-deoxyadenosine + 2 L-methionine + 2 reduced [2Fe-2S]-[ferredoxin]. Its pathway is protein modification; protein lipoylation via endogenous pathway; protein N(6)-(lipoyl)lysine from octanoyl-[acyl-carrier-protein]: step 2/2. Its function is as follows. Catalyzes the radical-mediated insertion of two sulfur atoms into the C-6 and C-8 positions of the octanoyl moiety bound to the lipoyl domains of lipoate-dependent enzymes, thereby converting the octanoylated domains into lipoylated derivatives. This Rhizobium etli (strain ATCC 51251 / DSM 11541 / JCM 21823 / NBRC 15573 / CFN 42) protein is Lipoyl synthase.